The following is a 507-amino-acid chain: Congo red hypersensitive protein 1 (507 aa).

Positions 1–22 (MKVLDLLTVLSASSLLSTFAAA) are cleaved as a signal peptide. A GH16 domain is found at 34 to 260 (ASSTASCNPL…KVIVTDYSTG (227 aa)). An intrachain disulfide couples Cys40 to Cys48. Asn117 is a glycosylation site (N-linked (GlcNAc...) asparagine). Residue Glu134 is the Nucleophile of the active site. Glu138 functions as the Proton donor in the catalytic mechanism. Glu138 is a chitin binding site. 2 N-linked (GlcNAc...) asparagine glycosylation sites follow: Asn177 and Asn201. Trp219 and Thr230 together coordinate chitin. Disordered regions lie at residues 329–368 (SSSA…SSKT) and 381–478 (SSFE…TNSV). Composition is skewed to low complexity over residues 381 to 439 (SSFE…PVQD) and 451 to 477 (TSST…STNS). Residue Asn482 is the site of GPI-anchor amidated asparagine attachment. A propeptide spans 483-507 (GADLAQSLPREGKLFSVLVALLALL) (removed in mature form).

The protein belongs to the glycosyl hydrolase 16 family. CRH1 subfamily. In terms of processing, the GPI-anchor is attached to the protein in the endoplasmic reticulum and serves to target the protein to the cell surface. There, the glucosamine-inositol phospholipid moiety is cleaved off and the GPI-modified mannoprotein is covalently attached via its lipidless GPI glycan remnant to the 1,6-beta-glucan of the outer cell wall layer.

It is found in the secreted. Its subcellular location is the cell wall. It localises to the membrane. The enzyme catalyses Random endo-hydrolysis of N-acetyl-beta-D-glucosaminide (1-&gt;4)-beta-linkages in chitin and chitodextrins.. In terms of biological role, dual chitinase/transglycosylase that plays a role in cell wall architecture. Chitinase and transglycosylase activities are coupled. Required for the polysaccharide cross-linking at the septa and the cell wall. More specifically, transfers chitin to both beta(1-3)- and beta(1-6)glucan in the cell wall. The minimal number of intact hexopyranose units required in the molecule of the acceptor oligosaccharide is two and the effectivity of the acceptor increased with the increasing length of its oligosaccharide chain. In Saccharomyces cerevisiae (strain ATCC 204508 / S288c) (Baker's yeast), this protein is Congo red hypersensitive protein 1.